Reading from the N-terminus, the 699-residue chain is D-(-)-3-hydroxybutyrate oligomer hydrolase (699 aa).

The first 33 residues, 1-33 (MTAIRGGSRRAPGLALALLGGVLLGACHGDENA), serve as a signal peptide directing secretion. Residue Ser311 is the Charge relay system of the active site.

The protein belongs to the D-(-)-3-hydroxybutyrate oligomer hydrolase family.

It is found in the secreted. It carries out the reaction (3R)-hydroxybutanoate dimer + H2O = 2 (R)-3-hydroxybutanoate + H(+). It participates in lipid metabolism; butanoate metabolism. Participates in the degradation of poly-3-hydroxybutyrate (PHB). It works downstream of poly(3-hydroxybutyrate) depolymerase, hydrolyzing D(-)-3-hydroxybutyrate oligomers of various length (3HB-oligomers) into 3HB-monomers. This Burkholderia mallei (strain SAVP1) protein is D-(-)-3-hydroxybutyrate oligomer hydrolase.